A 298-amino-acid chain; its full sequence is Estradiol 17-beta-dehydrogenase 11 (298 aa).

Positions 1 to 21 (MKYLLDLILLLPLLIVFSIES) are cleaved as a signal peptide. 40–64 (LITGAGHGIGRLTAYEFAKLNTKLV) contacts NADP(+). Ser-172 lines the substrate pocket. The active-site Proton acceptor is the Tyr-185.

This sequence belongs to the short-chain dehydrogenases/reductases (SDR) family. 17-beta-HSD 3 subfamily. Expressed in the liver (at protein level). Also expressed in the intestine and, at much lower levels, in the kidney.

It localises to the endoplasmic reticulum. The protein localises to the lipid droplet. The catalysed reaction is 17beta-estradiol + NAD(+) = estrone + NADH + H(+). It carries out the reaction 17beta-estradiol + NADP(+) = estrone + NADPH + H(+). Its function is as follows. Can convert androstan-3-alpha,17-beta-diol (3-alpha-diol) to androsterone in vitro, suggesting that it may participate in androgen metabolism during steroidogenesis. May act by metabolizing compounds that stimulate steroid synthesis and/or by generating metabolites that inhibit it. Has no activity toward DHEA (dehydroepiandrosterone), or A-dione (4-androste-3,17-dione), and only a slight activity toward testosterone to A-dione. This chain is Estradiol 17-beta-dehydrogenase 11 (Hsd17b11), found in Mus musculus (Mouse).